The chain runs to 89 residues: Small ribosomal subunit protein uS14 (89 aa).

Belongs to the universal ribosomal protein uS14 family. Part of the 30S ribosomal subunit. Contacts proteins S3 and S10.

Binds 16S rRNA, required for the assembly of 30S particles and may also be responsible for determining the conformation of the 16S rRNA at the A site. This is Small ribosomal subunit protein uS14 from Deinococcus radiodurans (strain ATCC 13939 / DSM 20539 / JCM 16871 / CCUG 27074 / LMG 4051 / NBRC 15346 / NCIMB 9279 / VKM B-1422 / R1).